Here is an 85-residue protein sequence, read N- to C-terminus: Large ribosomal subunit protein bL27 (85 aa).

Residues methionine 1–leucine 21 form a disordered region. Polar residues predominate over residues serine 9–glutamine 19.

It belongs to the bacterial ribosomal protein bL27 family.

The polypeptide is Large ribosomal subunit protein bL27 (Pectobacterium atrosepticum (strain SCRI 1043 / ATCC BAA-672) (Erwinia carotovora subsp. atroseptica)).